The primary structure comprises 648 residues: Threonine--tRNA ligase (648 aa).

Residues 1–61 (MIKITLPDGS…TTDGSLVLYT (61 aa)) enclose the TGS domain. The interval 240–539 (DHRKLGKELE…LLEHTAGNFP (300 aa)) is catalytic. Zn(2+) contacts are provided by Cys-335, His-386, and His-516.

It belongs to the class-II aminoacyl-tRNA synthetase family. Homodimer. Zn(2+) is required as a cofactor.

It is found in the cytoplasm. The enzyme catalyses tRNA(Thr) + L-threonine + ATP = L-threonyl-tRNA(Thr) + AMP + diphosphate + H(+). In terms of biological role, catalyzes the attachment of threonine to tRNA(Thr) in a two-step reaction: L-threonine is first activated by ATP to form Thr-AMP and then transferred to the acceptor end of tRNA(Thr). Also edits incorrectly charged L-seryl-tRNA(Thr). The chain is Threonine--tRNA ligase from Flavobacterium psychrophilum (strain ATCC 49511 / DSM 21280 / CIP 103535 / JIP02/86).